Here is a 212-residue protein sequence, read N- to C-terminus: Methylthioribulose-1-phosphate dehydratase (212 aa).

Residues histidine 97 and histidine 99 each contribute to the Zn(2+) site.

Belongs to the aldolase class II family. MtnB subfamily. Homotetramer. Requires Zn(2+) as cofactor.

The enzyme catalyses 5-(methylsulfanyl)-D-ribulose 1-phosphate = 5-methylsulfanyl-2,3-dioxopentyl phosphate + H2O. It functions in the pathway amino-acid biosynthesis; L-methionine biosynthesis via salvage pathway; L-methionine from S-methyl-5-thio-alpha-D-ribose 1-phosphate: step 2/6. In terms of biological role, catalyzes the dehydration of methylthioribulose-1-phosphate (MTRu-1-P) into 2,3-diketo-5-methylthiopentyl-1-phosphate (DK-MTP-1-P). This Bacillus thuringiensis (strain Al Hakam) protein is Methylthioribulose-1-phosphate dehydratase.